We begin with the raw amino-acid sequence, 562 residues long: Tetratricopeptide repeat protein 34 (562 aa).

The tract at residues 1–30 is disordered; sequence MLHKKPQRANENGISQRKKPSDQDNSSVKE. A compositionally biased stretch (basic and acidic residues) spans 19–30; it reads KPSDQDNSSVKE. TPR repeat units follow at residues 51–84, 175–208, 210–242, 304–337, 388–421, 423–455, 461–494, and 509–542; these read DVSR…SSQR, KDSL…EPYN, EALS…DASY, AHFH…NAID, FQAA…SNNN, KYLR…HSSH, AEDY…EHAS, and AGIF…DENN.

The polypeptide is Tetratricopeptide repeat protein 34 (ttc34) (Xenopus laevis (African clawed frog)).